We begin with the raw amino-acid sequence, 434 residues long: Serine hydroxymethyltransferase (434 aa).

Position 120-122 (120-122) interacts with (6S)-5,6,7,8-tetrahydrofolate; sequence GHI. At lysine 236 the chain carries N6-(pyridoxal phosphate)lysine. Glutamate 255 contributes to the (6S)-5,6,7,8-tetrahydrofolate binding site.

It belongs to the SHMT family. As to quaternary structure, homodimer. The cofactor is pyridoxal 5'-phosphate.

Its subcellular location is the cytoplasm. It functions in the pathway amino-acid biosynthesis; glycine biosynthesis; glycine from L-serine: step 1/1. Functionally, catalyzes the reversible interconversion of serine and glycine with a modified folate serving as the one-carbon carrier. Also exhibits a pteridine-independent aldolase activity toward beta-hydroxyamino acids, producing glycine and aldehydes, via a retro-aldol mechanism. This chain is Serine hydroxymethyltransferase, found in Korarchaeum cryptofilum (strain OPF8).